The following is a 338-amino-acid chain: Aspartate-semialdehyde dehydrogenase (338 aa).

NADP(+) contacts are provided by residues 13–16 (TGAV) and 41–42 (RS). Arginine 101 lines the phosphate pocket. The Acyl-thioester intermediate role is filled by cysteine 130. Glutamine 157 serves as a coordination point for substrate. 160–161 (SG) contributes to the NADP(+) binding site. Lysine 214 provides a ligand contact to phosphate. Arginine 236 is a binding site for substrate. The active-site Proton acceptor is histidine 243. Glutamine 316 contacts NADP(+).

The protein belongs to the aspartate-semialdehyde dehydrogenase family. In terms of assembly, homodimer.

It carries out the reaction L-aspartate 4-semialdehyde + phosphate + NADP(+) = 4-phospho-L-aspartate + NADPH + H(+). It functions in the pathway amino-acid biosynthesis; L-lysine biosynthesis via DAP pathway; (S)-tetrahydrodipicolinate from L-aspartate: step 2/4. The protein operates within amino-acid biosynthesis; L-methionine biosynthesis via de novo pathway; L-homoserine from L-aspartate: step 2/3. Its pathway is amino-acid biosynthesis; L-threonine biosynthesis; L-threonine from L-aspartate: step 2/5. In terms of biological role, catalyzes the NADPH-dependent formation of L-aspartate-semialdehyde (L-ASA) by the reductive dephosphorylation of L-aspartyl-4-phosphate. This Synechocystis sp. (strain ATCC 27184 / PCC 6803 / Kazusa) protein is Aspartate-semialdehyde dehydrogenase (asd).